Here is a 401-residue protein sequence, read N- to C-terminus: MIRNIKVEHLHETPIEKQETELVERKGVGHPDSISDGLAEAVSRALCKEYIDKCGAILHHNTDETQIVAGRSRPEFGGGEVLKPIYTLLVGRATMEFDGMEIPAETVALQAAREYVRNTIPAMDLERDMIIDCKLGTGSSDLRDVFTRDHVPMANDTSFGVGHAPFSELEQVVYNTERQLLTDLKKKKIPGIGEDIKVMGLRENNDISLTICCGMVGRHIDDMDHYINAKEEMTEYVLDLATKYTDRTVSARINAADKVDGGCDCVFLTVTGTSAEMGDDGSVGRGNRSNGLITPSRPMSMEATSGKNPINHIGKIYNLLSTQMARDVVSAVDEVSDVHIKLLSQIGMPIDQPLVASAQVIPEDGANFAHIQSEAVVVIDDWLENITKITDMVVKGELDTF.

ATP is bound at residue 136–141 (GTGSSD). Residues 278 to 305 (GDDGSVGRGNRSNGLITPSRPMSMEATS) form a disordered region.

The protein belongs to the AdoMet synthase 2 family. Mg(2+) serves as cofactor.

It catalyses the reaction L-methionine + ATP + H2O = S-adenosyl-L-methionine + phosphate + diphosphate. Its pathway is amino-acid biosynthesis; S-adenosyl-L-methionine biosynthesis; S-adenosyl-L-methionine from L-methionine: step 1/1. Its function is as follows. Catalyzes the formation of S-adenosylmethionine from methionine and ATP. The chain is S-adenosylmethionine synthase from Methanococcoides burtonii (strain DSM 6242 / NBRC 107633 / OCM 468 / ACE-M).